The primary structure comprises 470 residues: MSTNEGSLWGGRFADGPADALAALSKSTHFDWVLAPYDVVASKAHARVLFRAGLLTEEQRDGLLAGLDSLGSDVADGSFGPLVSDEDVHGALERGLIDRVGADLGGRLRAGRSRNDQVATLFRLWLRDAIRRVADGVLEVVAALATQAAAHPTAIMPGKTHLQSAQPVLLAHHLLAHAHPLLRDVDRLADFDKRAAVSPYGSGALAGSSLGLDPDAIAEELGFAAAADNSIDATASRDFAAEAAFVFSMIGVDLSRLAEDIILWSTTEFGYVTLHDAWSTGSSIMPQKKNPDIAELARGKSGRLIGNLAGLLATLKAQPLAYNRDLQEDKEPVFDSVAQLELLLPAMAGLVGTLRFDVDRMAELAPLGYTLATDVAEWLVRRGVPFRVAHEAAGAAVRAAEARGIGLEDLADAELTGIHPQLTADVREVLTTEGSVNSRDARGGTAPTQVARQLSAVRDTSERFRVRLRR.

This sequence belongs to the lyase 1 family. Argininosuccinate lyase subfamily.

It is found in the cytoplasm. It catalyses the reaction 2-(N(omega)-L-arginino)succinate = fumarate + L-arginine. It functions in the pathway amino-acid biosynthesis; L-arginine biosynthesis; L-arginine from L-ornithine and carbamoyl phosphate: step 3/3. In Mycolicibacterium vanbaalenii (strain DSM 7251 / JCM 13017 / BCRC 16820 / KCTC 9966 / NRRL B-24157 / PYR-1) (Mycobacterium vanbaalenii), this protein is Argininosuccinate lyase.